The following is a 187-amino-acid chain: MDWLTILGISVALAMDAFAVALAAGAVISPITGRHLFRLGFHFGLFQALMPIGGWLLGMTVQRWISAYDHWIAFGLLVFVGGRMVHEAFEDDEDKTPSDPTKGMTMVMLSVATSIDAFAVGLSIAMLGVSVWLPATVIGLVAGVLTVAGMLMGRRLGEKWGKRVEICGGLVLCLIGLKILLEHTLLK.

A run of 6 helical transmembrane segments spans residues 3–23 (WLTI…VALA), 39–59 (LGFH…LLGM), 65–85 (ISAY…GRMV), 103–123 (GMTM…VGLS), 124–144 (IAML…VAGV), and 166–186 (ICGG…HTLL).

This sequence belongs to the MntP (TC 9.B.29) family.

It is found in the cell inner membrane. In terms of biological role, probably functions as a manganese efflux pump. This is Putative manganese efflux pump MntP from Geobacter sp. (strain M21).